We begin with the raw amino-acid sequence, 919 residues long: Eukaryotic translation initiation factor 3 subunit C (919 aa).

Residues 1–28 (MSRFFANGSDSESESSEEEVQAPNFNKA) form a disordered region. The span at 11 to 20 (SESESSEEEV) shows a compositional bias: acidic residues. Phosphoserine is present on residues Ser-34, Ser-165, and Ser-177. Residues 154 to 275 (LSRFRENPQE…EQKIKLRKRA (122 aa)) form a disordered region. Positions 162–171 (QEESENEDEE) are enriched in acidic residues. The span at 210–236 (ADDEDSDESIDWDPDTESETESSEDEN) shows a compositional bias: acidic residues. Residues 241 to 269 (MRERFLKRSTEKDDKDDDKRKDKRKEQKI) are compositionally biased toward basic and acidic residues. A PCI domain is found at 640 to 816 (FHMHINLELL…ETVVMHRSEP (177 aa)). Positions 848–919 (FFQRGNMGNR…QQQVQTIDEE (72 aa)) are disordered. Residues 883–894 (QRNRNQRGHHKN) are compositionally biased toward basic residues. Low complexity predominate over residues 895 to 919 (QQNQNQQQQQQHQREQQQVQTIDEE).

It belongs to the eIF-3 subunit C family. Component of the eukaryotic translation initiation factor 3 (eIF-3) complex. The eIF-3 complex interacts with pix.

The protein localises to the cytoplasm. In terms of biological role, component of the eukaryotic translation initiation factor 3 (eIF-3) complex, which is involved in protein synthesis of a specialized repertoire of mRNAs and, together with other initiation factors, stimulates binding of mRNA and methionyl-tRNAi to the 40S ribosome. The eIF-3 complex specifically targets and initiates translation of a subset of mRNAs involved in cell proliferation. The polypeptide is Eukaryotic translation initiation factor 3 subunit C (Drosophila willistoni (Fruit fly)).